Reading from the N-terminus, the 495-residue chain is Heterogeneous nuclear ribonucleoprotein Q (495 aa).

Positions 1–10 (MSDARDNDDR) are enriched in basic and acidic residues. The tract at residues 1–101 (MSDARDNDDR…KPPSPIDDED (101 aa)) is disordered. 2 stretches are compositionally biased toward acidic residues: residues 11–46 (VDFE…DDDV) and 67–101 (MEDV…DDED). 3 consecutive RRM domains span residues 116–194 (SEVF…LSET), 196–278 (NRLF…WADP), and 292–368 (KALY…LAKP). The segment at 452–495 (MPMAAAPPQRPRRNDRNNGSSGGSGRDNSHEHDGNRGGRRYRPY) is disordered. Basic and acidic residues predominate over residues 478–487 (DNSHEHDGNR).

In terms of assembly, interacts with LHP1 in the nucleus on a common set of chromatin regions. In terms of tissue distribution, predominantly expressed in vascular and meristematic tissues. Expressed throughout development in seedlings, roots, leaves, floral buds and siliques.

It localises to the nucleus. The protein localises to the cytoplasm. Its subcellular location is the microsome. Transcriptional activator that binds DNA on GAGA-like motif and 5'-(C/G)ACGTG(G/T)C(A/G)-3' consensus motif in the promoters of target genes. Component of ribonucleosomes, which are complexes of at least 20 other different heterogeneous nuclear ribonucleoproteins (hnRNP). hnRNP play an important role in processing of precursor mRNA in the nucleus. Required during flower development and for cell fate determination. Acts both as an antagonist and as a promoter of polycomb LHP1 gene regulation activity, depending of target genes, to regulate the transcription of stress-responsive and flowering genes. May regulate histone H3 trimethylation on lysine 27 (H3K27me3). Recognizes and binds histone H3 tails methylated at 'Lys-4' (H3K4me) and acetylated at 'Lys-9' (H3K9ac), leading to epigenetic activation. When in complex with LHP1, recognizes and binds histone H3 tails methylated at 'Lys-4' (H3K4me) and 'Lys-27' (H3K27me), mostly corresponding to stress-responsive genes. May function as a suppressor of cell-autonomous immune responses involving glucosinolates, salicylic acid (SA) and jasmonic acid (JA) pathways toward pathogenic bacteria and fungi. The polypeptide is Heterogeneous nuclear ribonucleoprotein Q (Arabidopsis thaliana (Mouse-ear cress)).